The sequence spans 107 residues: Thioredoxin (107 aa).

Residues 2 to 107 enclose the Thioredoxin domain; the sequence is DSIVHVTDDS…QLTAFLDSNX (106 aa). A disulfide bridge connects residues Cys-32 and Cys-35.

Belongs to the thioredoxin family.

Its function is as follows. Participates in various redox reactions through the reversible oxidation of its active center dithiol to a disulfide and catalyzes dithiol-disulfide exchange reactions. In Allochromatium vinosum (Chromatium vinosum), this protein is Thioredoxin (trxA).